The chain runs to 53 residues: MGMSFSHLLIVLLIIFVLFGAGKLPQVMSDLAKGLKAFKDGLKDDGSDNDKNK.

The helical transmembrane segment at 1–21 (MGMSFSHLLIVLLIIFVLFGA) threads the bilayer.

Belongs to the TatA/E family. As to quaternary structure, the Tat system comprises two distinct complexes: a TatABC complex, containing multiple copies of TatA, TatB and TatC subunits, and a separate TatA complex, containing only TatA subunits. Substrates initially bind to the TatABC complex, which probably triggers association of the separate TatA complex to form the active translocon.

Its subcellular location is the cell inner membrane. Functionally, part of the twin-arginine translocation (Tat) system that transports large folded proteins containing a characteristic twin-arginine motif in their signal peptide across membranes. TatA could form the protein-conducting channel of the Tat system. The sequence is that of Sec-independent protein translocase protein TatA from Rickettsia africae (strain ESF-5).